A 329-amino-acid polypeptide reads, in one-letter code: D-lactate dehydrogenase (329 aa).

Residues 154–155, Asp174, 205–206, Asn211, 232–234, and Asp258 each bind NAD(+); these read KI, CP, and TSR. Arg234 is a catalytic residue. Glu263 is a catalytic residue. His295 (proton donor) is an active-site residue.

This sequence belongs to the D-isomer specific 2-hydroxyacid dehydrogenase family.

The catalysed reaction is (R)-lactate + NAD(+) = pyruvate + NADH + H(+). Fermentative lactate dehydrogenase. This Escherichia coli (strain K12) protein is D-lactate dehydrogenase (ldhA).